A 1146-amino-acid polypeptide reads, in one-letter code: Activator of SKN7 protein 10 (1146 aa).

Residues 1–15 show a composition bias toward polar residues; sequence MSDYFSSRPSQTLTP. Disordered regions lie at residues 1-32 and 171-194; these read MSDYFSSRPSQTLTPMGNKPSGGGGGDDASSI and ITDPFTTAPRGPKKAQPAQKKVGL. Ser344 carries the phosphoserine modification. A PH domain is found at 482 to 606; the sequence is CIKAGYFLKK…DCTLKDASST (125 aa). A disordered region spans residues 553–575; sequence NNHHRQASDVHNSSTTTGGTAGA. The segment covering 564-575 has biased composition (low complexity); it reads NSSTTTGGTAGA. Ser793 is modified (phosphoserine). A Phosphothreonine modification is found at Thr808. 2 disordered regions span residues 835-854 and 909-982; these read MATSGNTTPSYSSGSRPQSM and PVNS…TAMR. Over residues 912–924 the composition is skewed to low complexity; sequence SPGSSNSESSSGG. Residues 939–950 show a composition bias toward polar residues; the sequence is YTQRNSEGSSPC. Phosphoserine is present on Ser944. The span at 958 to 968 shows a compositional bias: low complexity; that stretch reads QQQQPLQMQPL. Ser969 bears the Phosphoserine mark. The segment covering 969 to 982 has biased composition (polar residues); the sequence is SRTSSSSVNVTAMR. Thr1017 carries the phosphothreonine modification. Phosphoserine occurs at positions 1070, 1095, and 1098. Residues 1124 to 1146 are disordered; the sequence is GIQEDDGDSTNNDTIKLNQSIYS. Residues 1132 to 1146 show a composition bias toward polar residues; that stretch reads STNNDTIKLNQSIYS.

Belongs to the RGC1 family. As to quaternary structure, component of the RNA polymerase II holoenzyme. Interacts with RPO21 and SSN8. Post-translationally, phosphorylated in response to various stresses. stress-induced phosphorylation is partially dependent on HOG1.

The protein localises to the cytoplasm. In terms of biological role, positive regulator of FPS1 glycerol channel required for the glycerol efflux. As a component of the RNA polymerase II holoenzyme, is required for SSN8 destruction in response to oxidative stress but not heat shock. Required for cell survival in response to heat shock independent of SSN8. This chain is Activator of SKN7 protein 10 (ASK10), found in Saccharomyces cerevisiae (strain ATCC 204508 / S288c) (Baker's yeast).